Here is a 581-residue protein sequence, read N- to C-terminus: Laccase-1 (581 aa).

The first 25 residues, 1-25 (MENLGFLIISTFLLLFTTLLPYSSA), serve as a signal peptide directing secretion. Plastocyanin-like domains are found at residues 34–150 (NVEW…PRQP) and 161–312 (EIPI…YTGK). Asn80 carries an N-linked (GlcNAc...) asparagine glycan. Cu cation is bound by residues His84, His86, His129, and His131. 4 N-linked (GlcNAc...) asparagine glycosylation sites follow: Asn241, Asn300, Asn386, and Asn403. In terms of domain architecture, Plastocyanin-like 3 spans 429–565 (DFPEKPPNRF…AMGFIVKDGP (137 aa)). Cu cation contacts are provided by His482, His485, His487, His544, Cys545, His546, and His550.

This sequence belongs to the multicopper oxidase family. The cofactor is Cu cation. Expressed in roots, stems and flowers.

Its subcellular location is the secreted. The protein resides in the extracellular space. The protein localises to the apoplast. The enzyme catalyses 4 hydroquinone + O2 = 4 benzosemiquinone + 2 H2O. In terms of biological role, lignin degradation and detoxification of lignin-derived products. This chain is Laccase-1 (LAC1), found in Arabidopsis thaliana (Mouse-ear cress).